The primary structure comprises 1756 residues: RANBP2-like and GRIP domain-containing protein 2 (1756 aa).

Phosphoserine is present on Ser21. TPR repeat units lie at residues Pro59 to Gln92, Gln583 to Ile616, and Glu647 to Trp680. The tract at residues Gly759 to Glu804 is disordered. The span at Ser777 to Pro796 shows a compositional bias: low complexity. A RanBD1 1 domain is found at His1029 to Asp1165. Disordered regions lie at residues Thr1206–Trp1241 and Ala1299–Gly1324. The span at Ile1228–Pro1237 shows a compositional bias: polar residues. Acidic residues predominate over residues Thr1310 to Arg1322. One can recognise a RanBD1 2 domain in the interval Tyr1326–Lys1462. Positions Asn1573–Glu1586 are enriched in polar residues. A disordered region spans residues Asn1573 to Ser1614. Basic and acidic residues predominate over residues Ser1587 to Val1610. In terms of domain architecture, GRIP spans Gln1693–Val1743.

In Homo sapiens (Human), this protein is RANBP2-like and GRIP domain-containing protein 2 (RGPD2).